The primary structure comprises 225 residues: ATP-dependent Clp protease proteolytic subunit (225 aa).

The Nucleophile role is filled by Ser-123. His-148 is an active-site residue.

Belongs to the peptidase S14 family. Fourteen ClpP subunits assemble into 2 heptameric rings which stack back to back to give a disk-like structure with a central cavity, resembling the structure of eukaryotic proteasomes.

It is found in the cytoplasm. It catalyses the reaction Hydrolysis of proteins to small peptides in the presence of ATP and magnesium. alpha-casein is the usual test substrate. In the absence of ATP, only oligopeptides shorter than five residues are hydrolyzed (such as succinyl-Leu-Tyr-|-NHMec, and Leu-Tyr-Leu-|-Tyr-Trp, in which cleavage of the -Tyr-|-Leu- and -Tyr-|-Trp bonds also occurs).. Functionally, cleaves peptides in various proteins in a process that requires ATP hydrolysis. Has a chymotrypsin-like activity. Plays a major role in the degradation of misfolded proteins. This Chlorobium phaeovibrioides (strain DSM 265 / 1930) (Prosthecochloris vibrioformis (strain DSM 265)) protein is ATP-dependent Clp protease proteolytic subunit.